Here is a 182-residue protein sequence, read N- to C-terminus: Protein SYM1 (182 aa).

Helical transmembrane passes span 51-70, 98-118, and 135-155; these read TLRP…DKWY, LIFA…MEGG, and LLAN…LVPV.

It belongs to the peroxisomal membrane protein PXMP2/4 family.

The protein resides in the mitochondrion inner membrane. In terms of biological role, may be involved in cellular response to stress. Required to maintain mitochondrial DNA (mtDNA) integrity and stability. This is Protein SYM1 (SYM1) from Eremothecium gossypii (strain ATCC 10895 / CBS 109.51 / FGSC 9923 / NRRL Y-1056) (Yeast).